A 245-amino-acid polypeptide reads, in one-letter code: 8-amino-3,8-dideoxy-manno-octulosonate cytidylyltransferase (245 aa).

Belongs to the KdsB family.

The protein resides in the cytoplasm. The catalysed reaction is 8-amino-3,8-dideoxy-alpha-D-manno-octulosonate + CTP = CMP-8-amino-3,8-dideoxy-alpha-D-manno-oct-2-ulosonate + diphosphate. The protein operates within bacterial outer membrane biogenesis; lipopolysaccharide biosynthesis. Activates KDO8N (a required 8-carbon sugar) for incorporation into bacterial lipopolysaccharide in the Shewanella genus. This chain is 8-amino-3,8-dideoxy-manno-octulosonate cytidylyltransferase, found in Shewanella sp. (strain W3-18-1).